Here is a 388-residue protein sequence, read N- to C-terminus: Calcium-binding and spermatid-specific protein 1 (388 aa).

The interval Met1–Thr20 is disordered. Thr280 carries the post-translational modification Phosphothreonine; by CK2. Ser312 and Ser344 each carry phosphoserine.

It is found in the cytoplasm. The protein resides in the mitochondrion inner membrane. The protein localises to the cell projection. It localises to the cilium. Its subcellular location is the flagellum. It is found in the cytoplasmic vesicle. The protein resides in the secretory vesicle. The protein localises to the acrosome. In terms of biological role, calcium-binding protein. Essential for maintaining the structural integrity of the sperm flagella. This is Calcium-binding and spermatid-specific protein 1 (CABS1) from Bos taurus (Bovine).